A 354-amino-acid polypeptide reads, in one-letter code: MKQQQQTPELFEDFHMPITLDVSNISAYSPFLVPQDHLGHSGVFMGMSAFMLFLFIAGTAINVLTIVCTIQYKKLRSHLNYILVNLAISNLWVSVFGSSVAFYAFYKKYFVFGPIGCKIEGFTSTIGGMVSLWSLAVVALERWLVICKPLGNFTFKTPHAIAGCILPWCMALAAGLPPLLGWSRYIPEGLQCSCGPDWYTTNNKFNNESYVMFLFCFCFAVPFSTIVFCYGQLLITLKLAAKAQADSASTQKAEREVTKMVVVMVFGFLICWGPYAIFAIWVVSNRGAPFDLRLATIPSCLCKASTVYNPVIYVLMNKQFRSCMMKMVFNKNIEEDEASSSSQVTQVSSVAPEK.

Over 1 to 43 the chain is Extracellular; it reads MKQQQQTPELFEDFHMPITLDVSNISAYSPFLVPQDHLGHSGV. A glycan (N-linked (GlcNAc...) asparagine) is linked at Asn-24. Residues 44-68 traverse the membrane as a helical segment; that stretch reads FMGMSAFMLFLFIAGTAINVLTIVC. Residues 69 to 80 are Cytoplasmic-facing; that stretch reads TIQYKKLRSHLN. The chain crosses the membrane as a helical span at residues 81–106; that stretch reads YILVNLAISNLWVSVFGSSVAFYAFY. Residues 107–120 lie on the Extracellular side of the membrane; sequence KKYFVFGPIGCKIE. A disulfide bridge connects residues Cys-117 and Cys-194. Residues 121–140 form a helical membrane-spanning segment; sequence GFTSTIGGMVSLWSLAVVAL. The Cytoplasmic portion of the chain corresponds to 141 to 159; the sequence is ERWLVICKPLGNFTFKTPH. The chain crosses the membrane as a helical span at residues 160–183; that stretch reads AIAGCILPWCMALAAGLPPLLGWS. Residues 184–209 are Extracellular-facing; that stretch reads RYIPEGLQCSCGPDWYTTNNKFNNES. N-linked (GlcNAc...) asparagine glycosylation occurs at Asn-207. Residues 210-237 form a helical membrane-spanning segment; the sequence is YVMFLFCFCFAVPFSTIVFCYGQLLITL. The Cytoplasmic portion of the chain corresponds to 238–259; it reads KLAAKAQADSASTQKAEREVTK. A helical transmembrane segment spans residues 260-283; the sequence is MVVVMVFGFLICWGPYAIFAIWVV. At 284–291 the chain is on the extracellular side; sequence SNRGAPFD. A helical transmembrane segment spans residues 292–316; sequence LRLATIPSCLCKASTVYNPVIYVLM. Lys-303 is modified (N6-(retinylidene)lysine). The Cytoplasmic portion of the chain corresponds to 317–354; sequence NKQFRSCMMKMVFNKNIEEDEASSSSQVTQVSSVAPEK.

Belongs to the G-protein coupled receptor 1 family. Opsin subfamily. Phosphorylated on some or all of the serine and threonine residues present in the C-terminal region. As to expression, retinal long single cone outer segments.

The protein localises to the membrane. Visual pigments are the light-absorbing molecules that mediate vision. They consist of an apoprotein, opsin, covalently linked to cis-retinal. In Danio rerio (Zebrafish), this protein is Opsin-1, short-wave-sensitive 2 (opn1sw2).